The sequence spans 341 residues: Zinc transporter 6, chloroplastic (341 aa).

The chain crosses the membrane as a helical span at residues 28–48; it reads IVAVFAIFLTSVFGVWGPVLL. The Cytoplasmic portion of the chain corresponds to 49–61; sequence AKYFHGKPLYDKA. A helical transmembrane segment spans residues 62–82; that stretch reads ILVIKCFAAGVILSTSLVHVL. At 83-102 the chain is on the lumenal side; sequence PEAFESLADCQVSSRHPWKD. A helical membrane pass occupies residues 103-123; the sequence is FPFAGLVTMIGAITALLVDLT. The Cytoplasmic portion of the chain corresponds to 124–179; it reads ASEHMGHGGGGGGDGGMEYMPVGKAVGGLEMKEGKCGADLEIQENSEEEIVKMKQR. Residues 180–200 traverse the membrane as a helical segment; the sequence is LVSQVLEIGIIFHSVIIGVTM. Over 201–211 the chain is Lumenal; it reads GMSQNKCTIRP. The chain crosses the membrane as a helical span at residues 212–232; that stretch reads LIAALSFHQIFEGLGLGGCIA. The Cytoplasmic portion of the chain corresponds to 233–243; that stretch reads QAGFKAGTVVY. The helical transmembrane segment at 244-264 threads the bilayer; it reads MCLMFAVTTPLGIVLGMVIFA. The Lumenal segment spans residues 265 to 280; it reads ATGYDDQNPNALIMEG. The helical transmembrane segment at 281–301 threads the bilayer; it reads LLGSFSSGILIYMALVDLIAL. Residues 302 to 320 lie on the Cytoplasmic side of the membrane; sequence DFFHNKMLTTCGESGSRLK. A helical transmembrane segment spans residues 321 to 341; it reads KLCFVALVLGSASMSLLALWA.

This sequence belongs to the ZIP transporter (TC 2.A.5) family.

It is found in the plastid. The protein resides in the chloroplast thylakoid membrane. Functionally, may play a role in the transport of zinc in the plastids. This chain is Zinc transporter 6, chloroplastic (ZIP6), found in Arabidopsis thaliana (Mouse-ear cress).